Reading from the N-terminus, the 402-residue chain is Phosphoglycerate kinase (402 aa).

Residues aspartate 29–asparagine 31, arginine 45, histidine 69–arginine 72, arginine 125, and arginine 158 contribute to the substrate site. ATP is bound by residues lysine 209, glutamate 331, and glycine 357–threonine 360.

This sequence belongs to the phosphoglycerate kinase family.

The protein localises to the cytoplasm. It carries out the reaction (2R)-3-phosphoglycerate + ATP = (2R)-3-phospho-glyceroyl phosphate + ADP. It functions in the pathway carbohydrate degradation; glycolysis; pyruvate from D-glyceraldehyde 3-phosphate: step 2/5. The chain is Phosphoglycerate kinase (pgk) from Helicobacter pylori (strain J99 / ATCC 700824) (Campylobacter pylori J99).